The following is a 237-amino-acid chain: Ribonuclease PH (237 aa).

Residues Arg86 and 124 to 126 (GTR) contribute to the phosphate site.

The protein belongs to the RNase PH family. In terms of assembly, homohexameric ring arranged as a trimer of dimers.

It catalyses the reaction tRNA(n+1) + phosphate = tRNA(n) + a ribonucleoside 5'-diphosphate. Its function is as follows. Phosphorolytic 3'-5' exoribonuclease that plays an important role in tRNA 3'-end maturation. Removes nucleotide residues following the 3'-CCA terminus of tRNAs; can also add nucleotides to the ends of RNA molecules by using nucleoside diphosphates as substrates, but this may not be physiologically important. Probably plays a role in initiation of 16S rRNA degradation (leading to ribosome degradation) during starvation. The polypeptide is Ribonuclease PH (Bradyrhizobium diazoefficiens (strain JCM 10833 / BCRC 13528 / IAM 13628 / NBRC 14792 / USDA 110)).